Reading from the N-terminus, the 954-residue chain is Glycine dehydrogenase (decarboxylating) (954 aa).

K704 carries the post-translational modification N6-(pyridoxal phosphate)lysine.

The protein belongs to the GcvP family. In terms of assembly, the glycine cleavage system is composed of four proteins: P, T, L and H. The cofactor is pyridoxal 5'-phosphate.

It carries out the reaction N(6)-[(R)-lipoyl]-L-lysyl-[glycine-cleavage complex H protein] + glycine + H(+) = N(6)-[(R)-S(8)-aminomethyldihydrolipoyl]-L-lysyl-[glycine-cleavage complex H protein] + CO2. Its function is as follows. The glycine cleavage system catalyzes the degradation of glycine. The P protein binds the alpha-amino group of glycine through its pyridoxal phosphate cofactor; CO(2) is released and the remaining methylamine moiety is then transferred to the lipoamide cofactor of the H protein. The sequence is that of Glycine dehydrogenase (decarboxylating) from Sinorhizobium medicae (strain WSM419) (Ensifer medicae).